We begin with the raw amino-acid sequence, 330 residues long: Type II methyltransferase M.HaeIII (330 aa).

Positions 1-327 constitute an SAM-dependent MTase C5-type domain; sequence MNLISLFSGA…KTIKSALEIC (327 aa). ATP is bound by residues glutamate 29 and 50 to 51; that span reads DI. Cysteine 71 is a catalytic residue. Asparagine 260 is an ATP binding site.

It belongs to the class I-like SAM-binding methyltransferase superfamily. C5-methyltransferase family. In terms of assembly, monomer.

The enzyme catalyses a 2'-deoxycytidine in DNA + S-adenosyl-L-methionine = a 5-methyl-2'-deoxycytidine in DNA + S-adenosyl-L-homocysteine + H(+). In terms of biological role, a methylase, recognizes the double-stranded sequence 5'-GGCC-3', methylates C-3 on both strands, and protects the DNA from cleavage by the HaeIII endonuclease. The protein is Type II methyltransferase M.HaeIII (haeIIIM) of Haemophilus aegyptius.